The sequence spans 620 residues: Probable potassium transport system protein Kup (620 aa).

12 helical membrane passes run 8 to 28 (VGLL…SPLY), 50 to 70 (VLSL…VILI), 102 to 122 (MLLG…TPAI), 136 to 156 (PDLK…LFAI), 168 to 188 (FGPV…ANIV), 211 to 231 (LMSF…EALY), 246 to 266 (WFSL…ALLI), 284 to 304 (MVMP…QAVI), 336 to 356 (IYVP…VIGF), 368 to 388 (IAVT…MALL), 393 to 413 (MALV…YFAA), and 415 to 435 (IIKV…SFTV).

Belongs to the HAK/KUP transporter (TC 2.A.72) family.

Its subcellular location is the cell inner membrane. It catalyses the reaction K(+)(in) + H(+)(in) = K(+)(out) + H(+)(out). Functionally, transport of potassium into the cell. Likely operates as a K(+):H(+) symporter. This Rhodopseudomonas palustris (strain HaA2) protein is Probable potassium transport system protein Kup.